We begin with the raw amino-acid sequence, 424 residues long: Elongation factor 1-alpha (424 aa).

A tr-type G domain is found at 5-223 (KPHLNLAFIG…NALKEPQKPV (219 aa)). The G1 stretch occupies residues 14 to 21 (GHVDHGKS). A GTP-binding site is contributed by 14–21 (GHVDHGKS). A Mg(2+)-binding site is contributed by S21. The tract at residues 70-74 (GVTID) is G2. A G3 region spans residues 91–94 (DCPG). Residues 91–95 (DCPGH) and 146–149 (NKMD) contribute to the GTP site. The segment at 146-149 (NKMD) is G4. A G5 region spans residues 187–189 (SAY).

It belongs to the TRAFAC class translation factor GTPase superfamily. Classic translation factor GTPase family. EF-Tu/EF-1A subfamily.

The protein localises to the cytoplasm. The catalysed reaction is GTP + H2O = GDP + phosphate + H(+). In terms of biological role, GTP hydrolase that promotes the GTP-dependent binding of aminoacyl-tRNA to the A-site of ribosomes during protein biosynthesis. In Methanothrix thermoacetophila (strain DSM 6194 / JCM 14653 / NBRC 101360 / PT) (Methanosaeta thermophila), this protein is Elongation factor 1-alpha.